We begin with the raw amino-acid sequence, 266 residues long: Proteasome subunit beta type-7 (266 aa).

Residues 1-34 (MENLNRGGFDFDLCNRNNVLEKTGLRMKGFMKTG) constitute a propeptide, removed in mature form. T35 serves as the catalytic Nucleophile.

It belongs to the peptidase T1B family. In terms of assembly, the 26S proteasome consists of a 20S proteasome core and two 19S regulatory subunits. The 20S proteasome core is composed of 28 subunits that are arranged in four stacked rings, resulting in a barrel-shaped structure. The two end rings are each formed by seven alpha subunits, and the two central rings are each formed by seven beta subunits. The catalytic chamber with the active sites is on the inside of the barrel.

The protein resides in the cytoplasm. The protein localises to the nucleus. The catalysed reaction is Cleavage of peptide bonds with very broad specificity.. In terms of biological role, the proteasome is a multicatalytic proteinase complex which is characterized by its ability to cleave peptides with Arg, Phe, Tyr, Leu, and Glu adjacent to the leaving group at neutral or slightly basic pH. The proteasome has an ATP-dependent proteolytic activity. The polypeptide is Proteasome subunit beta type-7 (psmB7) (Dictyostelium discoideum (Social amoeba)).